Reading from the N-terminus, the 306-residue chain is MDTPPLSESDSESDACLASDQELQDAFSRGLLKPGLNVVLEKPKKAVNDVSGLKQCLAEFRRDLEWVERLDVTLGPVPEVSETQPTPQNQDQKKGVNPEDDFQREMSFYRQAQAAVLAVLPRLHQLQVPTKRPTDYFAEMAKSDQQMQKIRQKLQTKQAAMEKSEKAKQLRALRKYGKKVQTEVLQKRQREKAHMMNAIKKYQKGFSDKLDFLEGDQKPVERSAKAGGKGQQMSKGPNAKRRYKNQKFGFGGKKKGSKWNTKESYDDVSSFRAKVAHGKGSRRPGKKGANKRPGKRARQKLKSKAR.

M1 bears the N-acetylmethionine mark. Disordered regions lie at residues 1–20 (MDTP…LASD), 75–103 (GPVP…DDFQ), and 150–169 (IRQK…KAKQ). T3 is modified (phosphothreonine). S7, S9, S11, and S13 each carry phosphoserine. The segment covering 81-90 (SETQPTPQNQ) has biased composition (polar residues). The span at 91 to 103 (DQKKGVNPEDDFQ) shows a compositional bias: basic and acidic residues. K93 participates in a covalent cross-link: Glycyl lysine isopeptide (Lys-Gly) (interchain with G-Cter in SUMO2). Residues 135–171 (DYFAEMAKSDQQMQKIRQKLQTKQAAMEKSEKAKQLR) adopt a coiled-coil conformation. Glycyl lysine isopeptide (Lys-Gly) (interchain with G-Cter in SUMO2) cross-links involve residues K179 and K218. Basic and acidic residues predominate over residues 213–224 (LEGDQKPVERSA). The segment at 213–306 (LEGDQKPVER…ARQKLKSKAR (94 aa)) is disordered. Phosphoserine occurs at positions 264 and 270. Residues 274–306 (KVAHGKGSRRPGKKGANKRPGKRARQKLKSKAR) show a composition bias toward basic residues.

It belongs to the EBP2 family. As to quaternary structure, interacts with WDR46.

It is found in the nucleus. The protein resides in the nucleolus. Required for the processing of the 27S pre-rRNA. The protein is Probable rRNA-processing protein EBP2 (Ebna1bp2) of Mus musculus (Mouse).